We begin with the raw amino-acid sequence, 384 residues long: 8-amino-7-oxononanoate synthase (384 aa).

Arg-21 is a substrate binding site. 108–109 lines the pyridoxal 5'-phosphate pocket; sequence GF. Substrate is bound at residue His-133. Ser-179, His-207, and Thr-233 together coordinate pyridoxal 5'-phosphate. Position 236 is an N6-(pyridoxal phosphate)lysine (Lys-236). Substrate is bound at residue Thr-352.

This sequence belongs to the class-II pyridoxal-phosphate-dependent aminotransferase family. BioF subfamily. In terms of assembly, homodimer. The cofactor is pyridoxal 5'-phosphate.

The catalysed reaction is 6-carboxyhexanoyl-[ACP] + L-alanine + H(+) = (8S)-8-amino-7-oxononanoate + holo-[ACP] + CO2. Its pathway is cofactor biosynthesis; biotin biosynthesis. In terms of biological role, catalyzes the decarboxylative condensation of pimeloyl-[acyl-carrier protein] and L-alanine to produce 8-amino-7-oxononanoate (AON), [acyl-carrier protein], and carbon dioxide. This chain is 8-amino-7-oxononanoate synthase, found in Escherichia coli (strain UTI89 / UPEC).